Here is an 89-residue protein sequence, read N- to C-terminus: Small ribosomal subunit protein bS20 (89 aa).

Positions 1–11 (MANIKSQIKRN) are enriched in polar residues. The segment at 1–22 (MANIKSQIKRNLTNEKRRLRNK) is disordered.

It belongs to the bacterial ribosomal protein bS20 family.

Its function is as follows. Binds directly to 16S ribosomal RNA. This chain is Small ribosomal subunit protein bS20, found in Frankia casuarinae (strain DSM 45818 / CECT 9043 / HFP020203 / CcI3).